A 169-amino-acid chain; its full sequence is Putative glycine cleavage system H protein, mitochondrial (169 aa).

Residues 60–142 (VGTVGITSYA…EEEGWICKIK (83 aa)) enclose the Lipoyl-binding domain. Position 101 is an N6-lipoyllysine (lysine 101). The residue at position 131 (serine 131) is a Phosphoserine.

It belongs to the GcvH family. In terms of assembly, component of the glycine decarboxylase complex (GDC), which is composed of four proteins: P, T, L and H. (R)-lipoate is required as a cofactor.

It is found in the mitochondrion. In terms of biological role, the glycine cleavage system (glycine decarboxylase complex) catalyzes the degradation of glycine. The H protein shuttles the methylamine group of glycine from the P protein to the T protein. In Schizosaccharomyces pombe (strain 972 / ATCC 24843) (Fission yeast), this protein is Putative glycine cleavage system H protein, mitochondrial (gcv3).